Reading from the N-terminus, the 488-residue chain is Alpha-ketoglutaric semialdehyde dehydrogenase (488 aa).

Residues Lys180 and 233–238 (GSNQVG) contribute to the NAD(+) site. Glu255 serves as the catalytic Proton acceptor. The active-site Nucleophile is Cys289. Positions 336 and 390 each coordinate NAD(+).

It belongs to the aldehyde dehydrogenase family. Homotetramer.

It carries out the reaction 2,5-dioxopentanoate + NADP(+) + H2O = 2-oxoglutarate + NADPH + 2 H(+). The catalysed reaction is 2,5-dioxopentanoate + NAD(+) + H2O = 2-oxoglutarate + NADH + 2 H(+). Its function is as follows. Catalyzes the NAD(P)(+)-dependent oxidation of alpha-ketoglutaric semialdehyde (alphaKGSA) to alpha-ketoglutarate. Prefers NADP(+) to NAD(+) as a cosubstrate. In vitro, can also use various aldehydes. This Bacillus subtilis (strain 168) protein is Alpha-ketoglutaric semialdehyde dehydrogenase.